We begin with the raw amino-acid sequence, 248 residues long: Large ribosomal subunit protein uL4 (248 aa).

Disordered stretches follow at residues 48-96 (GTHK…PVPR) and 210-248 (AFSE…RTGA). Positions 233–248 (DATKARSSRHDDRTGA) are enriched in basic and acidic residues.

It belongs to the universal ribosomal protein uL4 family. As to quaternary structure, part of the 50S ribosomal subunit.

In terms of biological role, one of the primary rRNA binding proteins, this protein initially binds near the 5'-end of the 23S rRNA. It is important during the early stages of 50S assembly. It makes multiple contacts with different domains of the 23S rRNA in the assembled 50S subunit and ribosome. Forms part of the polypeptide exit tunnel. The chain is Large ribosomal subunit protein uL4 from Tropheryma whipplei (strain Twist) (Whipple's bacillus).